We begin with the raw amino-acid sequence, 151 residues long: Chaperonin GroEL (151 aa).

An ATP-binding site is contributed by 41 to 45 (DGTTT).

This sequence belongs to the chaperonin (HSP60) family. Forms a cylinder of 14 subunits composed of two heptameric rings stacked back-to-back. Interacts with the co-chaperonin GroES.

It is found in the cytoplasm. The catalysed reaction is ATP + H2O + a folded polypeptide = ADP + phosphate + an unfolded polypeptide.. Together with its co-chaperonin GroES, plays an essential role in assisting protein folding. The GroEL-GroES system forms a nano-cage that allows encapsulation of the non-native substrate proteins and provides a physical environment optimized to promote and accelerate protein folding. This Mycobacteroides chelonae (Mycobacterium chelonae) protein is Chaperonin GroEL.